Here is a 448-residue protein sequence, read N- to C-terminus: CCA-adding enzyme (448 aa).

Positions 52 and 55 each coordinate ATP. Ser-52 and Lys-55 together coordinate CTP. Mg(2+)-binding residues include Asp-64, Asp-66, and Asp-118. 3 residues coordinate ATP: His-141, Lys-160, and Tyr-169. CTP contacts are provided by His-141, Lys-160, and Tyr-169.

It belongs to the tRNA nucleotidyltransferase/poly(A) polymerase family. Archaeal CCA-adding enzyme subfamily. In terms of assembly, homodimer. It depends on Mg(2+) as a cofactor.

The catalysed reaction is a tRNA precursor + 2 CTP + ATP = a tRNA with a 3' CCA end + 3 diphosphate. It carries out the reaction a tRNA with a 3' CCA end + 2 CTP + ATP = a tRNA with a 3' CCACCA end + 3 diphosphate. Catalyzes the addition and repair of the essential 3'-terminal CCA sequence in tRNAs without using a nucleic acid template. Adds these three nucleotides in the order of C, C, and A to the tRNA nucleotide-73, using CTP and ATP as substrates and producing inorganic pyrophosphate. tRNA 3'-terminal CCA addition is required both for tRNA processing and repair. Also involved in tRNA surveillance by mediating tandem CCA addition to generate a CCACCA at the 3' terminus of unstable tRNAs. While stable tRNAs receive only 3'-terminal CCA, unstable tRNAs are marked with CCACCA and rapidly degraded. This Pyrococcus abyssi (strain GE5 / Orsay) protein is CCA-adding enzyme.